The primary structure comprises 89 residues: Small ribosomal subunit protein uS15 (89 aa).

This sequence belongs to the universal ribosomal protein uS15 family. In terms of assembly, part of the 30S ribosomal subunit. Forms a bridge to the 50S subunit in the 70S ribosome, contacting the 23S rRNA.

Its function is as follows. One of the primary rRNA binding proteins, it binds directly to 16S rRNA where it helps nucleate assembly of the platform of the 30S subunit by binding and bridging several RNA helices of the 16S rRNA. Functionally, forms an intersubunit bridge (bridge B4) with the 23S rRNA of the 50S subunit in the ribosome. The chain is Small ribosomal subunit protein uS15 from Nitratidesulfovibrio vulgaris (strain DSM 19637 / Miyazaki F) (Desulfovibrio vulgaris).